The following is a 232-amino-acid chain: Large ribosomal subunit protein uL1 (232 aa).

It belongs to the universal ribosomal protein uL1 family. As to quaternary structure, part of the 50S ribosomal subunit.

Binds directly to 23S rRNA. The L1 stalk is quite mobile in the ribosome, and is involved in E site tRNA release. In terms of biological role, protein L1 is also a translational repressor protein, it controls the translation of the L11 operon by binding to its mRNA. This is Large ribosomal subunit protein uL1 from Bacillus cereus (strain ATCC 14579 / DSM 31 / CCUG 7414 / JCM 2152 / NBRC 15305 / NCIMB 9373 / NCTC 2599 / NRRL B-3711).